The chain runs to 308 residues: NADH-cytochrome b5 reductase 1 (308 aa).

The chain crosses the membrane as a helical span at residues 29–49 (VASSPAFLVAAAAIVIAAAFY). The 104-residue stretch at 64–167 (SIWKEFPLQK…KGPKGNFKYT (104 aa)) folds into the FAD-binding FR-type domain. Residues 147-162 (ASLK…GPKG) and 173-205 (HLGM…NITL) contribute to the FAD site.

Belongs to the flavoprotein pyridine nucleotide cytochrome reductase family. Monomer. Component of the 2-(3-amino-3-carboxypropyl)histidine synthase complex composed of DPH1, DPH2, DPH3 and a NADH-dependent reductase, predominantly MCR1.1. It depends on FAD as a cofactor.

It is found in the mitochondrion outer membrane. The enzyme catalyses 2 Fe(III)-[cytochrome b5] + NADH = 2 Fe(II)-[cytochrome b5] + NAD(+) + H(+). It catalyses the reaction 2 Fe(3+)-[Dph3] + NADH = 2 Fe(2+)-[Dph3] + NAD(+) + H(+). It functions in the pathway protein modification; peptidyl-diphthamide biosynthesis. NADH-dependent reductase for DPH3 and cytochrome b5. Required for the first step of diphthamide biosynthesis, a post-translational modification of histidine which occurs in elongation factor 2. DPH1 and DPH2 transfer a 3-amino-3-carboxypropyl (ACP) group from S-adenosyl-L-methionine (SAM) to a histidine residue, the reaction is assisted by a reduction system comprising DPH3 and a NADH-dependent reductase, predominantly MCR1.1. By reducing DPH3, also involved in the formation of the tRNA wobble base modification mcm5s 2U (5-methoxycarbonylmethyl-2-thiouridine), mediated by the elongator complex. The cytochrome b5/NADH cytochrome b5 reductase electron transfer system supports the catalytic activity of several sterol biosynthetic enzymes. The polypeptide is NADH-cytochrome b5 reductase 1 (MCR1.1) (Laccaria bicolor (strain S238N-H82 / ATCC MYA-4686) (Bicoloured deceiver)).